A 617-amino-acid chain; its full sequence is Electron transfer flavoprotein-ubiquinone oxidoreductase, mitochondrial (617 aa).

Residues 1–33 (MLVPLAKLSCLAYQCFHALKIKKNYLPLCATRW) constitute a mitochondrion transit peptide. 71-85 (VVIVGAGPAGLSAAV) lines the FAD pocket. Residue K96 is modified to N6-acetyllysine. Residues 109–130 (IGAHTLSGACLDPGAFKELFPD) lie within the membrane without spanning it. Residues K132 and K223 each carry the N6-acetyllysine modification. A ubiquinone is bound by residues G305 and G306. K357 carries the N6-acetyllysine modification. Residues 428 to 447 (IGLHVTEYEDNLKNSWVWKE) lie within the membrane without spanning it. S551 is modified (phosphoserine). [4Fe-4S] cluster contacts are provided by C561, C586, C589, and C592. Residues 577 to 606 (FRLQINAQNCVHCKTCDIKDPSQNINWVVP) enclose the 4Fe-4S ferredoxin-type domain.

The protein belongs to the ETF-QO/FixC family. As to quaternary structure, monomer. It depends on [4Fe-4S] cluster as a cofactor. FAD serves as cofactor.

It is found in the mitochondrion inner membrane. It catalyses the reaction a ubiquinone + reduced [electron-transfer flavoprotein] = a ubiquinol + oxidized [electron-transfer flavoprotein] + H(+). Functionally, accepts electrons from ETF and reduces ubiquinone. The polypeptide is Electron transfer flavoprotein-ubiquinone oxidoreductase, mitochondrial (Homo sapiens (Human)).